Consider the following 378-residue polypeptide: tRNA-specific 2-thiouridylase MnmA (378 aa).

ATP is bound by residues 7-14 (GLSGGVDS) and methionine 33. Positions 102–104 (NPD) are interaction with target base in tRNA. Cysteine 107 functions as the Nucleophile in the catalytic mechanism. Cysteines 107 and 209 form a disulfide. Residue glycine 132 coordinates ATP. The tract at residues 159 to 161 (KDQ) is interaction with tRNA. The Cysteine persulfide intermediate role is filled by cysteine 209. The segment at 316-317 (RY) is interaction with tRNA.

The protein belongs to the MnmA/TRMU family.

It is found in the cytoplasm. It carries out the reaction S-sulfanyl-L-cysteinyl-[protein] + uridine(34) in tRNA + AH2 + ATP = 2-thiouridine(34) in tRNA + L-cysteinyl-[protein] + A + AMP + diphosphate + H(+). Its function is as follows. Catalyzes the 2-thiolation of uridine at the wobble position (U34) of tRNA, leading to the formation of s(2)U34. This Aster yellows witches'-broom phytoplasma (strain AYWB) protein is tRNA-specific 2-thiouridylase MnmA.